The following is a 210-amino-acid chain: Ribosomal RNA small subunit methyltransferase G (210 aa).

Residues Gly-76, Met-81, 127 to 128 (VE), and Arg-145 contribute to the S-adenosyl-L-methionine site.

Belongs to the methyltransferase superfamily. RNA methyltransferase RsmG family.

The protein localises to the cytoplasm. It catalyses the reaction guanosine(527) in 16S rRNA + S-adenosyl-L-methionine = N(7)-methylguanosine(527) in 16S rRNA + S-adenosyl-L-homocysteine. Its function is as follows. Specifically methylates the N7 position of guanine in position 527 of 16S rRNA. In Acinetobacter baumannii (strain AB307-0294), this protein is Ribosomal RNA small subunit methyltransferase G.